A 228-amino-acid chain; its full sequence is N-acylneuraminate cytidylyltransferase (228 aa).

Belongs to the CMP-NeuNAc synthase family.

Its subcellular location is the cytoplasm. It catalyses the reaction an N-acylneuraminate + CTP = a CMP-N-acyl-beta-neuraminate + diphosphate. The sequence is that of N-acylneuraminate cytidylyltransferase (neuA) from Neisseria meningitidis serogroup B (strain ATCC BAA-335 / MC58).